The chain runs to 349 residues: Neutral protease 2 homolog ACLA_052720 (349 aa).

The first 19 residues, 1–19 (MQLTVLASAILALAQGALA), serve as a signal peptide directing secretion. Positions 20 to 172 (IPAKAPALDV…PAAINLLDRR (153 aa)) are excised as a propeptide. Intrachain disulfides connect cysteine 178–cysteine 250 and cysteine 257–cysteine 275. Zn(2+) is bound at residue histidine 300. Glutamate 301 is a catalytic residue. Zn(2+) is bound by residues histidine 304 and aspartate 315.

Belongs to the peptidase M35 family. Zn(2+) serves as cofactor.

The protein localises to the secreted. The catalysed reaction is Preferential cleavage of bonds with hydrophobic residues in P1'. Also 3-Asn-|-Gln-4 and 8-Gly-|-Ser-9 bonds in insulin B chain.. Secreted metalloproteinase that allows assimilation of proteinaceous substrates. Shows high activities on basic nuclear substrates such as histone and protamine. In Aspergillus clavatus (strain ATCC 1007 / CBS 513.65 / DSM 816 / NCTC 3887 / NRRL 1 / QM 1276 / 107), this protein is Neutral protease 2 homolog ACLA_052720.